The sequence spans 462 residues: Cysteine--tRNA ligase (462 aa).

Cys28 contributes to the Zn(2+) binding site. Positions 30–40 match the 'HIGH' region motif; the sequence is ITVYDLCHIGH. Residues Cys210, His235, and Glu239 each contribute to the Zn(2+) site. A 'KMSKS' region motif is present at residues 267 to 271; sequence KMSKS. Lys270 contacts ATP.

It belongs to the class-I aminoacyl-tRNA synthetase family. As to quaternary structure, monomer. The cofactor is Zn(2+).

It is found in the cytoplasm. The enzyme catalyses tRNA(Cys) + L-cysteine + ATP = L-cysteinyl-tRNA(Cys) + AMP + diphosphate. This is Cysteine--tRNA ligase from Erwinia tasmaniensis (strain DSM 17950 / CFBP 7177 / CIP 109463 / NCPPB 4357 / Et1/99).